We begin with the raw amino-acid sequence, 420 residues long: Arginine biosynthesis bifunctional protein ArgJ (420 aa).

Thr-167, Lys-193, Thr-204, Glu-284, Asn-415, and Thr-420 together coordinate substrate. Thr-204 acts as the Nucleophile in catalysis.

The protein belongs to the ArgJ family. As to quaternary structure, heterotetramer of two alpha and two beta chains.

The protein resides in the cytoplasm. The catalysed reaction is N(2)-acetyl-L-ornithine + L-glutamate = N-acetyl-L-glutamate + L-ornithine. It catalyses the reaction L-glutamate + acetyl-CoA = N-acetyl-L-glutamate + CoA + H(+). It participates in amino-acid biosynthesis; L-arginine biosynthesis; L-ornithine and N-acetyl-L-glutamate from L-glutamate and N(2)-acetyl-L-ornithine (cyclic): step 1/1. It functions in the pathway amino-acid biosynthesis; L-arginine biosynthesis; N(2)-acetyl-L-ornithine from L-glutamate: step 1/4. In terms of biological role, catalyzes two activities which are involved in the cyclic version of arginine biosynthesis: the synthesis of N-acetylglutamate from glutamate and acetyl-CoA as the acetyl donor, and of ornithine by transacetylation between N(2)-acetylornithine and glutamate. The sequence is that of Arginine biosynthesis bifunctional protein ArgJ from Prochlorococcus marinus (strain NATL2A).